The primary structure comprises 148 residues: Single-stranded DNA-binding protein 1-B, mitochondrial (148 aa).

A mitochondrion-targeting transit peptide spans 1–17; that stretch reads MFHRPVLQVFRQFARCQ. One can recognise an SSB domain in the interval 30–142; the sequence is MNKVQLLGRV…IIADNIIFLT (113 aa).

Homotetramer.

It localises to the mitochondrion. The protein resides in the mitochondrion matrix. Its subcellular location is the mitochondrion nucleoid. Functionally, binds preferentially and cooperatively to pyrimidine rich single-stranded DNA (ss-DNA). Required to maintain the copy number of mitochondrial DNA (mtDNA) and plays crucial roles during mtDNA replication that stimulate activity of the DNA polymerase at the replication fork. May also function in mtDNA repair. The protein is Single-stranded DNA-binding protein 1-B, mitochondrial (ssbp1-b) of Xenopus laevis (African clawed frog).